Consider the following 342-residue polypeptide: Uroporphyrinogen decarboxylase (342 aa).

Residues 24 to 28, Asp74, Tyr151, Ser206, and His322 contribute to the substrate site; that span reads RQAGR.

This sequence belongs to the uroporphyrinogen decarboxylase family. Homodimer.

Its subcellular location is the cytoplasm. It catalyses the reaction uroporphyrinogen III + 4 H(+) = coproporphyrinogen III + 4 CO2. Its pathway is porphyrin-containing compound metabolism; protoporphyrin-IX biosynthesis; coproporphyrinogen-III from 5-aminolevulinate: step 4/4. Functionally, catalyzes the decarboxylation of four acetate groups of uroporphyrinogen-III to yield coproporphyrinogen-III. This chain is Uroporphyrinogen decarboxylase, found in Paracoccus denitrificans (strain Pd 1222).